The primary structure comprises 332 residues: Ferredoxin--NADP reductase (332 aa).

FAD-binding residues include Asp-33, Gln-41, Tyr-46, Ala-86, Met-121, Asp-282, and Ser-325.

Belongs to the ferredoxin--NADP reductase type 2 family. Homodimer. FAD is required as a cofactor.

The enzyme catalyses 2 reduced [2Fe-2S]-[ferredoxin] + NADP(+) + H(+) = 2 oxidized [2Fe-2S]-[ferredoxin] + NADPH. The chain is Ferredoxin--NADP reductase from Sulfurisphaera tokodaii (strain DSM 16993 / JCM 10545 / NBRC 100140 / 7) (Sulfolobus tokodaii).